Here is a 337-residue protein sequence, read N- to C-terminus: Phosphate acyltransferase (337 aa).

Belongs to the PlsX family. As to quaternary structure, homodimer. Probably interacts with PlsY.

The protein localises to the cytoplasm. The enzyme catalyses a fatty acyl-[ACP] + phosphate = an acyl phosphate + holo-[ACP]. Its pathway is lipid metabolism; phospholipid metabolism. Catalyzes the reversible formation of acyl-phosphate (acyl-PO(4)) from acyl-[acyl-carrier-protein] (acyl-ACP). This enzyme utilizes acyl-ACP as fatty acyl donor, but not acyl-CoA. In Listeria innocua serovar 6a (strain ATCC BAA-680 / CLIP 11262), this protein is Phosphate acyltransferase.